The following is a 342-amino-acid chain: Oxygen-dependent coproporphyrinogen-III oxidase (342 aa).

S98 is a substrate binding site. 2 residues coordinate a divalent metal cation: H102 and H112. The active-site Proton donor is H112. Substrate is bound at residue 114–116; the sequence is NYR. Residues H146 and H176 each contribute to the a divalent metal cation site. Residues 266–301 form an important for dimerization region; that stretch reads YVEFNLVWDRGTIFGLQTNGRTESILMSLPPLARWE.

This sequence belongs to the aerobic coproporphyrinogen-III oxidase family. In terms of assembly, homodimer. It depends on a divalent metal cation as a cofactor.

It localises to the cytoplasm. It carries out the reaction coproporphyrinogen III + O2 + 2 H(+) = protoporphyrinogen IX + 2 CO2 + 2 H2O. Its pathway is porphyrin-containing compound metabolism; protoporphyrin-IX biosynthesis; protoporphyrinogen-IX from coproporphyrinogen-III (O2 route): step 1/1. In terms of biological role, involved in the heme and chlorophyll biosynthesis. Catalyzes the aerobic oxidative decarboxylation of propionate groups of rings A and B of coproporphyrinogen-III to yield the vinyl groups in protoporphyrinogen-IX. This Prochlorococcus marinus (strain MIT 9301) protein is Oxygen-dependent coproporphyrinogen-III oxidase.